Here is an 83-residue protein sequence, read N- to C-terminus: MGVFQILMKNKELIPLAFFISVAATGATSFALYALKKTDVVIDRKRNPEPWEMVDPTQPQKLITINQQWKPVEELQKVRRATR.

Belongs to the complex I NDUFA4 subunit family. In terms of tissue distribution, strongly expressed in vertebrae, brain, intestine and stomach.

Its subcellular location is the nucleus. This is Normal mucosa of esophagus-specific gene 1 protein (Nmes1) from Mus musculus (Mouse).